The primary structure comprises 255 residues: Glycerol-3-phosphate regulon repressor (255 aa).

In terms of domain architecture, HTH deoR-type spans 3–58 (QSLRHQKIIKLVEQSGYLSTEELVAALDVSPQTIRRDLNILAELDLIRRHHGGAAS). A DNA-binding region (H-T-H motif) is located at residues 20–39 (LSTEELVAALDVSPQTIRRD).

Repressor of the glycerol-3-phosphate regulon. This is Glycerol-3-phosphate regulon repressor (glpR) from Haemophilus influenzae (strain ATCC 51907 / DSM 11121 / KW20 / Rd).